We begin with the raw amino-acid sequence, 173 residues long: Peptide deformylase (173 aa).

2 residues coordinate Fe cation: Cys-94 and His-136. The active site involves Glu-137. Fe cation is bound at residue His-140.

Belongs to the polypeptide deformylase family. Requires Fe(2+) as cofactor.

The catalysed reaction is N-terminal N-formyl-L-methionyl-[peptide] + H2O = N-terminal L-methionyl-[peptide] + formate. Functionally, removes the formyl group from the N-terminal Met of newly synthesized proteins. Requires at least a dipeptide for an efficient rate of reaction. N-terminal L-methionine is a prerequisite for activity but the enzyme has broad specificity at other positions. The protein is Peptide deformylase of Desulfosudis oleivorans (strain DSM 6200 / JCM 39069 / Hxd3) (Desulfococcus oleovorans).